Reading from the N-terminus, the 327-residue chain is Tryptophan--tRNA ligase (327 aa).

Residues 9-11 and 17-18 each bind ATP; these read RPT and GN. A 'HIGH' region motif is present at residues 10–18; that stretch reads PTGNLHLGN. Asp-133 contacts L-tryptophan. Residues 145 to 147, Val-186, and 194 to 198 contribute to the ATP site; these read GKD and KMGKS. Positions 194–198 match the 'KMSKS' region motif; sequence KMGKS.

The protein belongs to the class-I aminoacyl-tRNA synthetase family. As to quaternary structure, homodimer.

The protein resides in the cytoplasm. It carries out the reaction tRNA(Trp) + L-tryptophan + ATP = L-tryptophyl-tRNA(Trp) + AMP + diphosphate + H(+). Functionally, catalyzes the attachment of tryptophan to tRNA(Trp). The sequence is that of Tryptophan--tRNA ligase from Porphyromonas gingivalis (strain ATCC BAA-308 / W83).